Here is a 74-residue protein sequence, read N- to C-terminus: Large ribosomal subunit protein uL29 (74 aa).

The protein belongs to the universal ribosomal protein uL29 family.

The protein is Large ribosomal subunit protein uL29 of Nostoc sp. (strain PCC 7120 / SAG 25.82 / UTEX 2576).